A 66-amino-acid chain; its full sequence is Large ribosomal subunit protein uL29 (66 aa).

This sequence belongs to the universal ribosomal protein uL29 family.

This is Large ribosomal subunit protein uL29 from Thermosipho melanesiensis (strain DSM 12029 / CIP 104789 / BI429).